Reading from the N-terminus, the 159-residue chain is 2-C-methyl-D-erythritol 2,4-cyclodiphosphate synthase (159 aa).

D10 and H12 together coordinate a divalent metal cation. 4-CDP-2-C-methyl-D-erythritol 2-phosphate contacts are provided by residues 10 to 12 (DVH) and 36 to 37 (HS). H44 is an a divalent metal cation binding site. 4-CDP-2-C-methyl-D-erythritol 2-phosphate contacts are provided by residues 58–60 (DIG), 63–67 (FPDTD), 102–108 (AQAPKMA), 134–137 (TTTE), F141, and R144.

The protein belongs to the IspF family. Homotrimer. A divalent metal cation is required as a cofactor.

The catalysed reaction is 4-CDP-2-C-methyl-D-erythritol 2-phosphate = 2-C-methyl-D-erythritol 2,4-cyclic diphosphate + CMP. Its pathway is isoprenoid biosynthesis; isopentenyl diphosphate biosynthesis via DXP pathway; isopentenyl diphosphate from 1-deoxy-D-xylulose 5-phosphate: step 4/6. Functionally, involved in the biosynthesis of isopentenyl diphosphate (IPP) and dimethylallyl diphosphate (DMAPP), two major building blocks of isoprenoid compounds. Catalyzes the conversion of 4-diphosphocytidyl-2-C-methyl-D-erythritol 2-phosphate (CDP-ME2P) to 2-C-methyl-D-erythritol 2,4-cyclodiphosphate (ME-CPP) with a corresponding release of cytidine 5-monophosphate (CMP). This Shewanella piezotolerans (strain WP3 / JCM 13877) protein is 2-C-methyl-D-erythritol 2,4-cyclodiphosphate synthase.